Reading from the N-terminus, the 544-residue chain is Chaperonin GroEL (544 aa).

ATP-binding positions include 30-33 (TLGP), Lys51, 87-91 (DGTTT), Gly415, 481-483 (DAL), and Asp497.

It belongs to the chaperonin (HSP60) family. As to quaternary structure, forms a cylinder of 14 subunits composed of two heptameric rings stacked back-to-back. Interacts with the co-chaperonin GroES.

The protein localises to the cytoplasm. The enzyme catalyses ATP + H2O + a folded polypeptide = ADP + phosphate + an unfolded polypeptide.. Functionally, together with its co-chaperonin GroES, plays an essential role in assisting protein folding. The GroEL-GroES system forms a nano-cage that allows encapsulation of the non-native substrate proteins and provides a physical environment optimized to promote and accelerate protein folding. The polypeptide is Chaperonin GroEL (Chlamydia trachomatis serovar D (strain ATCC VR-885 / DSM 19411 / UW-3/Cx)).